A 357-amino-acid chain; its full sequence is Protein pelota homolog (357 aa).

The protein belongs to the eukaryotic release factor 1 family. Pelota subfamily. Monomer. Requires a divalent metal cation as cofactor.

The protein localises to the cytoplasm. Its function is as follows. May function in recognizing stalled ribosomes, interact with stem-loop structures in stalled mRNA molecules, and effect endonucleolytic cleavage of the mRNA. May play a role in the release non-functional ribosomes and degradation of damaged mRNAs. Has endoribonuclease activity. This Methanocella arvoryzae (strain DSM 22066 / NBRC 105507 / MRE50) protein is Protein pelota homolog.